A 955-amino-acid chain; its full sequence is MPSLPAPPAPLLLLGLLLLGSRPARGAGPEPPVLPIRSEKEPLPVRGAAGCTFGGKVYALDETWHPDLGEPFGVMRCVLCACEAPQWGRRTRGPGRVSCKNIKPECPTPACGQPRQLPGHCCQTCPQERSSSERQPSGLSFEYPRDPEHRSYSDRGEPGAEERARGDGHTDFVALLTGPRSQAVARARVSLLRSSLRFSISYRRLDRPTRIRFSDSNGSVLFEHPAAPTQDGLVCGVWRAVPRLSLRLLRAEQLHVALVTLTHPSGEVWGPLIRHRALAAETFSAILTLEGPPQQGVGGITLLTLSDTEDSLHFLLLFRGLLEPRSGGLTQVPLRLQILHQGQLLRELQANVSAQEPGFAEVLPNLTVQEMDWLVLGELQMALEWAGRPGLRISGHIAARKSCDVLQSVLCGADALIPVQTGAAGSASLTLLGNGSLIYQVQVVGTSSEVVAMTLETKPQRRDQRTVLCHMAGLQPGGHTAVGICPGLGARGAHMLLQNELFLNVGTKDFPDGELRGHVAALPYCGHSARHDTLPVPLAGALVLPPVKSQAAGHAWLSLDTHCHLHYEVLLAGLGGSEQGTVTAHLLGPPGTPGPRRLLKGFYGSEAQGVVKDLEPELLRHLAKGMASLMITTKGSPRGELRGQVHIANQCEVGGLRLEAAGAEGVRALGAPDTASAAPPVVPGLPALAPAKPGGPGRPRDPNTCFFEGQQRPHGARWAPNYDPLCSLCTCQRRTVICDPVVCPPPSCPHPVQAPDQCCPVCPEKQDVRDLPGLPRSRDPGEGCYFDGDRSWRAAGTRWHPVVPPFGLIKCAVCTCKGGTGEVHCEKVQCPRLACAQPVRVNPTDCCKQCPVGSGAHPQLGDPMQADGPRGCRFAGQWFPESQSWHPSVPPFGEMSCITCRCGAGVPHCERDDCSLPLSCGSGKESRCCSRCTAHRRPAPETRTDPELEKEAEGS.

A signal peptide spans 1–26 (MPSLPAPPAPLLLLGLLLLGSRPARG). One can recognise a VWFC 1 domain in the interval 49 to 126 (AGCTFGGKVY…LPGHCCQTCP (78 aa)). A disordered region spans residues 124–168 (TCPQERSSSERQPSGLSFEYPRDPEHRSYSDRGEPGAEERARGDG). A compositionally biased stretch (polar residues) spans 125 to 138 (CPQERSSSERQPSG). Residues 143–168 (YPRDPEHRSYSDRGEPGAEERARGDG) show a composition bias toward basic and acidic residues. CHRD domains are found at residues 168-277 (GHTD…RHRA), 279-402 (AAET…ARKS), 403-524 (CDVL…ALPY), and 530-650 (RHDT…IANQ). Residues asparagine 217, asparagine 351, asparagine 365, and asparagine 434 are each glycosylated (N-linked (GlcNAc...) asparagine). The interval 675–703 (ASAAPPVVPGLPALAPAKPGGPGRPRDPN) is disordered. VWFC domains follow at residues 703–763 (NTCF…PVCP), 784–850 (CYFD…CKQC), and 872–932 (CRFA…CSRC). A disordered region spans residues 934–955 (AHRRPAPETRTDPELEKEAEGS). Residues 938-955 (PAPETRTDPELEKEAEGS) show a composition bias toward basic and acidic residues.

Belongs to the chordin family. In terms of assembly, interacts with TWSG1 and/or BMP4. Cleaved by tolloid proteases; cleavage participates in dorsoventral patterning during early development. In terms of tissue distribution, expressed at the highest level in liver.

The protein resides in the secreted. Dorsalizing factor. Key developmental protein that dorsalizes early vertebrate embryonic tissues by binding to ventralizing TGF-beta family bone morphogenetic proteins (BMPs) and sequestering them in latent complexes. The polypeptide is Chordin (CHRD) (Homo sapiens (Human)).